A 437-amino-acid chain; its full sequence is Glutamate-1-semialdehyde 2,1-aminomutase (437 aa).

K273 bears the N6-(pyridoxal phosphate)lysine mark.

This sequence belongs to the class-III pyridoxal-phosphate-dependent aminotransferase family. HemL subfamily. In terms of assembly, homodimer. Pyridoxal 5'-phosphate serves as cofactor.

Its subcellular location is the cytoplasm. The catalysed reaction is (S)-4-amino-5-oxopentanoate = 5-aminolevulinate. The protein operates within porphyrin-containing compound metabolism; protoporphyrin-IX biosynthesis; 5-aminolevulinate from L-glutamyl-tRNA(Glu): step 2/2. The protein is Glutamate-1-semialdehyde 2,1-aminomutase of Chlamydia felis (strain Fe/C-56) (Chlamydophila felis).